The chain runs to 444 residues: 23S rRNA (uracil(1939)-C(5))-methyltransferase RlmD (444 aa).

The TRAM domain maps to 5-67; that stretch reads RNRFDRTPFQ…RHFDEAKTVE (63 aa). Residues C80, C86, C89, and C168 each coordinate [4Fe-4S] cluster. S-adenosyl-L-methionine is bound by residues Q276, F305, N310, E326, D353, and D374. Residue C400 is the Nucleophile of the active site.

Belongs to the class I-like SAM-binding methyltransferase superfamily. RNA M5U methyltransferase family. RlmD subfamily.

The enzyme catalyses uridine(1939) in 23S rRNA + S-adenosyl-L-methionine = 5-methyluridine(1939) in 23S rRNA + S-adenosyl-L-homocysteine + H(+). Its function is as follows. Catalyzes the formation of 5-methyl-uridine at position 1939 (m5U1939) in 23S rRNA. The protein is 23S rRNA (uracil(1939)-C(5))-methyltransferase RlmD of Xanthomonas oryzae pv. oryzae (strain KACC10331 / KXO85).